The sequence spans 877 residues: Alanine--tRNA ligase (877 aa).

Zn(2+)-binding residues include His567, His571, Cys669, and His673.

The protein belongs to the class-II aminoacyl-tRNA synthetase family. The cofactor is Zn(2+).

It is found in the cytoplasm. The enzyme catalyses tRNA(Ala) + L-alanine + ATP = L-alanyl-tRNA(Ala) + AMP + diphosphate. Its function is as follows. Catalyzes the attachment of alanine to tRNA(Ala) in a two-step reaction: alanine is first activated by ATP to form Ala-AMP and then transferred to the acceptor end of tRNA(Ala). Also edits incorrectly charged Ser-tRNA(Ala) and Gly-tRNA(Ala) via its editing domain. This is Alanine--tRNA ligase from Lactobacillus delbrueckii subsp. bulgaricus (strain ATCC 11842 / DSM 20081 / BCRC 10696 / JCM 1002 / NBRC 13953 / NCIMB 11778 / NCTC 12712 / WDCM 00102 / Lb 14).